Reading from the N-terminus, the 403-residue chain is MSVADQMALIKRGAVEILVEKELEEKLEKSAKTGVPLKIKAGFDPTAPDLHLGHTVLLHKMRQFQQLGHEVIFLIGDFTGMIGDPTGKSETRKALSREDVLRNAETYKEQVFKILDPEKTRVAFNSEWLAKLDAGGMIGLAAKYTVARMLERDDFGKRFANQLPISIHEFLYPLIQGYDSVALQADVELGGTDQKFNLLVGRELQREWGQTPQTVITMPLLEGLDGVNKMSKSLGNYIGINEPADEIFGKIMSISDELMLRYYELLSDLSMAEIDGMRTGIRDGSVHPMEAKKQLGREVVARYHGAAAATDAEEHFVKRFRDNQTPDEMPELTLAATDEKVALCRLLAEAGLVKSNSEGRRAIQQGGVKVNGEKVSDESLELAATGVYVIQFGKRRFARITFA.

The 'HIGH' region motif lies at 45 to 54 (PTAPDLHLGH). The 'KMSKS' region motif lies at 229-233 (KMSKS). Position 232 (Lys232) interacts with ATP. The S4 RNA-binding domain occupies 341–402 (VALCRLLAEA…GKRRFARITF (62 aa)).

It belongs to the class-I aminoacyl-tRNA synthetase family. TyrS type 2 subfamily. In terms of assembly, homodimer.

Its subcellular location is the cytoplasm. The enzyme catalyses tRNA(Tyr) + L-tyrosine + ATP = L-tyrosyl-tRNA(Tyr) + AMP + diphosphate + H(+). Catalyzes the attachment of tyrosine to tRNA(Tyr) in a two-step reaction: tyrosine is first activated by ATP to form Tyr-AMP and then transferred to the acceptor end of tRNA(Tyr). The sequence is that of Tyrosine--tRNA ligase from Geobacter sulfurreducens (strain ATCC 51573 / DSM 12127 / PCA).